A 112-amino-acid polypeptide reads, in one-letter code: UPF0482 protein Ent638_1930 (112 aa).

Residues 1 to 27 (MTTLRKRLCLATLLSLTALAFTAPVSA) form the signal peptide.

This sequence belongs to the UPF0482 family.

In Enterobacter sp. (strain 638), this protein is UPF0482 protein Ent638_1930.